Reading from the N-terminus, the 94-residue chain is Evasin P1086 (94 aa).

An N-terminal signal peptide occupies residues 1–28 (MAFNVITFLQLAVFVVILFNINLHSASA). 3 disulfides stabilise this stretch: C48-C67, C52-C69, and C63-C80. N-linked (GlcNAc...) asparagine glycosylation occurs at N74.

It is found in the secreted. Salivary chemokine-binding protein which binds to host chemokines CXCL1, CXCL2, CXCL3, CXCL5, CXCL6, CXCL10, CXCL12 and CXCL13. The protein is Evasin P1086 of Ixodes ricinus (Common tick).